We begin with the raw amino-acid sequence, 573 residues long: Potassium-transporting ATPase potassium-binding subunit (573 aa).

10 consecutive transmembrane segments (helical) span residues 3 to 23 (AEGL…TPLL), 65 to 85 (GYTL…YALL), 136 to 156 (GLTV…VALI), 179 to 199 (LYVL…QGVP), 254 to 274 (LTNL…IYSF), 286 to 306 (ALWT…WWAE), 383 to 403 (AGLY…GLMV), 423 to 443 (VIAV…TTVV), 489 to 509 (GLGL…LAIA), and 531 to 551 (LFIT…FFPA).

The protein belongs to the KdpA family. In terms of assembly, the system is composed of three essential subunits: KdpA, KdpB and KdpC.

Its subcellular location is the cell inner membrane. In terms of biological role, part of the high-affinity ATP-driven potassium transport (or Kdp) system, which catalyzes the hydrolysis of ATP coupled with the electrogenic transport of potassium into the cytoplasm. This subunit binds the periplasmic potassium ions and delivers the ions to the membrane domain of KdpB through an intramembrane tunnel. The polypeptide is Potassium-transporting ATPase potassium-binding subunit (Rhodospirillum centenum (strain ATCC 51521 / SW)).